Consider the following 633-residue polypeptide: Phosphomethylpyrimidine synthase (633 aa).

Substrate-binding positions include Asn-245, Met-274, Tyr-303, His-339, 359 to 361 (SRG), 400 to 403 (DGLR), and Glu-439. His-443 serves as a coordination point for Zn(2+). Tyr-466 contacts substrate. Residue His-507 participates in Zn(2+) binding. Positions 587, 590, and 595 each coordinate [4Fe-4S] cluster.

This sequence belongs to the ThiC family. As to quaternary structure, homodimer. [4Fe-4S] cluster serves as cofactor.

The catalysed reaction is 5-amino-1-(5-phospho-beta-D-ribosyl)imidazole + S-adenosyl-L-methionine = 4-amino-2-methyl-5-(phosphooxymethyl)pyrimidine + CO + 5'-deoxyadenosine + formate + L-methionine + 3 H(+). The protein operates within cofactor biosynthesis; thiamine diphosphate biosynthesis. In terms of biological role, catalyzes the synthesis of the hydroxymethylpyrimidine phosphate (HMP-P) moiety of thiamine from aminoimidazole ribotide (AIR) in a radical S-adenosyl-L-methionine (SAM)-dependent reaction. The chain is Phosphomethylpyrimidine synthase from Neisseria meningitidis serogroup C (strain 053442).